Here is a 190-residue protein sequence, read N- to C-terminus: Potassium-transporting ATPase KdpC subunit (190 aa).

Residues 13 to 33 (IGFLLLTLVCGVLYPGVVTVF) traverse the membrane as a helical segment.

It belongs to the KdpC family. The system is composed of three essential subunits: KdpA, KdpB and KdpC.

The protein localises to the cell membrane. Part of the high-affinity ATP-driven potassium transport (or Kdp) system, which catalyzes the hydrolysis of ATP coupled with the electrogenic transport of potassium into the cytoplasm. This subunit acts as a catalytic chaperone that increases the ATP-binding affinity of the ATP-hydrolyzing subunit KdpB by the formation of a transient KdpB/KdpC/ATP ternary complex. This is Potassium-transporting ATPase KdpC subunit from Listeria monocytogenes serovar 1/2a (strain ATCC BAA-679 / EGD-e).